A 660-amino-acid polypeptide reads, in one-letter code: DNA ligase (660 aa).

NAD(+) contacts are provided by residues 33-37, 82-83, and Glu110; these read DFVYD and SL. Lys112 functions as the N6-AMP-lysine intermediate in the catalytic mechanism. NAD(+) contacts are provided by Arg133, Glu167, Lys281, and Lys305. Cys396, Cys399, Cys412, and Cys417 together coordinate Zn(2+). The BRCT domain occupies 583 to 660; that stretch reads DENRLLAGKK…SFEDIKSYLN (78 aa).

Belongs to the NAD-dependent DNA ligase family. LigA subfamily. The cofactor is Mg(2+). Mn(2+) is required as a cofactor.

It carries out the reaction NAD(+) + (deoxyribonucleotide)n-3'-hydroxyl + 5'-phospho-(deoxyribonucleotide)m = (deoxyribonucleotide)n+m + AMP + beta-nicotinamide D-nucleotide.. Its function is as follows. DNA ligase that catalyzes the formation of phosphodiester linkages between 5'-phosphoryl and 3'-hydroxyl groups in double-stranded DNA using NAD as a coenzyme and as the energy source for the reaction. It is essential for DNA replication and repair of damaged DNA. This is DNA ligase from Borrelia garinii subsp. bavariensis (strain ATCC BAA-2496 / DSM 23469 / PBi) (Borreliella bavariensis).